Consider the following 425-residue polypeptide: Histidine--tRNA ligase (425 aa).

This sequence belongs to the class-II aminoacyl-tRNA synthetase family. In terms of assembly, homodimer.

It is found in the cytoplasm. It catalyses the reaction tRNA(His) + L-histidine + ATP = L-histidyl-tRNA(His) + AMP + diphosphate + H(+). The polypeptide is Histidine--tRNA ligase (Erwinia tasmaniensis (strain DSM 17950 / CFBP 7177 / CIP 109463 / NCPPB 4357 / Et1/99)).